A 68-amino-acid chain; its full sequence is DNA-directed RNA polymerase subunit omega (68 aa).

The protein belongs to the RNA polymerase subunit omega family. As to quaternary structure, the RNAP catalytic core consists of 2 alpha, 1 beta, 1 beta' and 1 omega subunit. When a sigma factor is associated with the core the holoenzyme is formed, which can initiate transcription.

The catalysed reaction is RNA(n) + a ribonucleoside 5'-triphosphate = RNA(n+1) + diphosphate. Promotes RNA polymerase assembly. Latches the N- and C-terminal regions of the beta' subunit thereby facilitating its interaction with the beta and alpha subunits. The chain is DNA-directed RNA polymerase subunit omega from Syntrophotalea carbinolica (strain DSM 2380 / NBRC 103641 / GraBd1) (Pelobacter carbinolicus).